The following is a 1318-amino-acid chain: Meiotically up-regulated gene 79 protein (1318 aa).

Disordered stretches follow at residues 177–198 (PVNS…SGSY), 208–227 (EEEL…IVVT), and 360–387 (PQAL…PPKG). A compositionally biased stretch (low complexity) spans 364 to 384 (AAAESPTTKAPTTKAPTSEAP). The 110-residue stretch at 1049 to 1158 (MISYKKMVLS…WIHSLNFNAA (110 aa)) folds into the PH domain.

Its subcellular location is the nucleus. Appears to have a role in sporulation. The protein is Meiotically up-regulated gene 79 protein (mug79) of Schizosaccharomyces pombe (strain 972 / ATCC 24843) (Fission yeast).